Reading from the N-terminus, the 30-residue chain is Cysteine-rich venom protein okinavin (30 aa).

The segment at 1 to 30 (SVDFDSESPRKPXIQNEIVDLHNPLRRXVN) is disordered.

This sequence belongs to the CRISP family. Contains 8 disulfide bonds. In terms of tissue distribution, expressed by the venom gland.

The protein resides in the secreted. In terms of biological role, inhibits calcium-activated potassium channels (KCa), voltage-gated potassium channel (Kv), and the calcium release channel/ryanodine receptor (RyR). The polypeptide is Cysteine-rich venom protein okinavin (Ovophis okinavensis (Ryukyu Island pit viper)).